Reading from the N-terminus, the 388-residue chain is Alanine racemase (388 aa).

K44 serves as the catalytic Proton acceptor; specific for D-alanine. Residue K44 is modified to N6-(pyridoxal phosphate)lysine. R142 contacts substrate. Y273 (proton acceptor; specific for L-alanine) is an active-site residue. M321 contacts substrate.

This sequence belongs to the alanine racemase family. Requires pyridoxal 5'-phosphate as cofactor.

The catalysed reaction is L-alanine = D-alanine. It participates in amino-acid biosynthesis; D-alanine biosynthesis; D-alanine from L-alanine: step 1/1. Its function is as follows. Catalyzes the interconversion of L-alanine and D-alanine. May also act on other amino acids. This is Alanine racemase (alr) from Mycobacterium ulcerans (strain Agy99).